A 147-amino-acid polypeptide reads, in one-letter code: Large ribosomal subunit protein bL9 (147 aa).

It belongs to the bacterial ribosomal protein bL9 family.

Functionally, binds to the 23S rRNA. The protein is Large ribosomal subunit protein bL9 of Mesoplasma florum (strain ATCC 33453 / NBRC 100688 / NCTC 11704 / L1) (Acholeplasma florum).